Here is a 315-residue protein sequence, read N- to C-terminus: MEARAQSGNGSQPLLQTPRDGGRPRGEPDPRDALTQQVHVLSLDQIRAIRNTNEYTEGPTVVPRPGLKPAPRPSTQHKHERLHGLPEHRQPPRLQHSQVHSSARAPLSRSISTVSSGSRSSTRTSTSSSSSEQRLLGSSFSSGPVADGIIRVQPKSELKPGELKPLSKEDLGLHAYRCEDCGKCKCKECTYPRPLPSDWICDKQCLCSAQNVIDYGTCVCCVKGLFYHCSNDDEDNCADNPCSCSQSHCCTRWSAMGVMSLFLPCLWCYLPAKGCLKLCQGCYDRVNRPGCRCKNSNTVCCKVPTVPRRNFEKPT.

A compositionally biased stretch (polar residues) spans 1–15; that stretch reads MEARAQSGNGSQPLL. The interval 1–140 is disordered; the sequence is MEARAQSGNG…SEQRLLGSSF (140 aa). Residues 20–32 show a composition bias toward basic and acidic residues; sequence DGGRPRGEPDPRD. The span at 108-140 shows a compositional bias: low complexity; sequence SRSISTVSSGSRSSTRTSTSSSSSEQRLLGSSF. Positions 118–315 are required for interaction with CAV1; sequence SRSSTRTSTS…VPRRNFEKPT (198 aa). Residues 177–291 enclose the SPR domain; sequence RCEDCGKCKC…CYDRVNRPGC (115 aa). A required for interaction with TESK1 region spans residues 178–315; sequence CEDCGKCKCK…VPRRNFEKPT (138 aa).

The protein belongs to the sprouty family. Forms heterodimers with SPRY1. Forms a tripartite complex containing GAB1, METTL13 and SPRY2. Within the complex interacts with METTL13. Interacts with RAF1. Interacts (via C-terminus) with TESK1 (via C-terminus); the interaction disrupts SPRY2 interaction with GRB2, potentially via disruption of SPRY2 serine dephosphorylation. Interacts with PPP2R1A/PP2A-A and PPP2CA/PP2A-C; the interaction with PPP2CA/PP2A-C is inhibited by interaction with TESK1, possibly by vesicular sequestration of SPRY2. Inhibition of the interaction with the serine/threonine-protein phosphatase 2A (PP2A) holoenzyme results in loss of PP2A-mediated dephosphorylation, resulting in the loss of SPRY2 interaction with GRB2. Interacts with GRB2. Interacts with CBL/C-CBL; the interaction inhibits CBL-mediated ubiquitination of EGFR. Interacts (via C-terminus) with CAV1 (via C-terminus). Post-translationally, cleaved at Pro-144 by the prolyl endopeptidase FAP (seprase) activity (in vitro).

Its subcellular location is the cytoplasm. It is found in the cytoskeleton. The protein localises to the cell projection. The protein resides in the ruffle membrane. In terms of biological role, antagonist of fibroblast growth factor (FGF) pathways via inhibition of FGF-mediated phosphorylation of ERK1/2. Thereby acts as an antagonist of FGF-induced retinal lens fiber differentiation, may inhibit limb bud outgrowth and may negatively modulate respiratory organogenesis. Inhibits TGFB-induced epithelial-to-mesenchymal transition in retinal lens epithelial cells. Inhibits CBL/C-CBL-mediated EGFR ubiquitination. This Pongo abelii (Sumatran orangutan) protein is Protein sprouty homolog 2 (SPRY2).